The sequence spans 515 residues: Bifunctional dihydrofolate reductase-thymidylate synthase (515 aa).

The region spanning 26 to 228 is the DHFR domain; the sequence is AFSIVVAADQ…LSYEIMKYVP (203 aa). V30 contacts substrate. Residues A32, 38 to 44, 81 to 83, and 101 to 104 contribute to the NADP(+) site; these read GIGDGET, RKT, and LSCR. Positions 154, 160, and 178 each coordinate substrate. 155–162 is a binding site for NADP(+); the sequence is GGARVYTE. A thymidylate synthase region spans residues 233–515; that stretch reads ERQYLELIDR…YPPIKMEMAV (283 aa). R253 is a binding site for dUMP. Residue C395 is part of the active site. DUMP is bound by residues H396, 416 to 420, N428, and 458 to 460; these read QRCCD and HVY.

In the N-terminal section; belongs to the dihydrofolate reductase family. The protein in the C-terminal section; belongs to the thymidylate synthase family.

The catalysed reaction is (6S)-5,6,7,8-tetrahydrofolate + NADP(+) = 7,8-dihydrofolate + NADPH + H(+). The enzyme catalyses dUMP + (6R)-5,10-methylene-5,6,7,8-tetrahydrofolate = 7,8-dihydrofolate + dTMP. It participates in cofactor biosynthesis; tetrahydrofolate biosynthesis; 5,6,7,8-tetrahydrofolate from 7,8-dihydrofolate: step 1/1. Bifunctional enzyme. Involved in de novo dTMP biosynthesis. Key enzyme in folate metabolism. Catalyzes an essential reaction for de novo glycine and purine synthesis, DNA precursor synthesis, and for the conversion of dUMP to dTMP. The protein is Bifunctional dihydrofolate reductase-thymidylate synthase of Crithidia fasciculata.